We begin with the raw amino-acid sequence, 75 residues long: Small ribosomal subunit protein bS18c (75 aa).

This sequence belongs to the bacterial ribosomal protein bS18 family. Part of the 30S ribosomal subunit.

Its subcellular location is the plastid. It is found in the chloroplast. The sequence is that of Small ribosomal subunit protein bS18c (rps18) from Anthoceros angustus (Hornwort).